Here is a 430-residue protein sequence, read N- to C-terminus: Enolase (430 aa).

Q163 lines the (2R)-2-phosphoglycerate pocket. Catalysis depends on E205, which acts as the Proton donor. Residues D242, E287, and D314 each contribute to the Mg(2+) site. (2R)-2-phosphoglycerate contacts are provided by K339, R368, S369, and K390. K339 functions as the Proton acceptor in the catalytic mechanism.

It belongs to the enolase family. The cofactor is Mg(2+).

The protein localises to the cytoplasm. Its subcellular location is the secreted. It localises to the cell surface. It catalyses the reaction (2R)-2-phosphoglycerate = phosphoenolpyruvate + H2O. It participates in carbohydrate degradation; glycolysis; pyruvate from D-glyceraldehyde 3-phosphate: step 4/5. Its function is as follows. Catalyzes the reversible conversion of 2-phosphoglycerate (2-PG) into phosphoenolpyruvate (PEP). It is essential for the degradation of carbohydrates via glycolysis. In Clostridioides difficile (strain 630) (Peptoclostridium difficile), this protein is Enolase.